Here is a 61-residue protein sequence, read N- to C-terminus: Insect toxin BsIT3 (61 aa).

One can recognise an LCN-type CS-alpha/beta domain in the interval 1–61 (DGYILNSKGC…RWTSSKNKCN (61 aa)). Cystine bridges form between Cys10–Cys60, Cys14–Cys35, Cys21–Cys42, and Cys25–Cys44.

Belongs to the long (4 C-C) scorpion toxin superfamily. Sodium channel inhibitor family. Beta subfamily. In terms of tissue distribution, expressed by the venom gland.

Its subcellular location is the secreted. Functionally, depressant insect beta-toxins cause a transient contraction paralysis followed by a slow flaccid paralysis. They bind voltage-independently at site-4 of sodium channels (Nav) and shift the voltage of activation toward more negative potentials thereby affecting sodium channel activation and promoting spontaneous and repetitive firing. This toxin is active only on insects. This Hottentotta tamulus sindicus (Scorpion) protein is Insect toxin BsIT3.